We begin with the raw amino-acid sequence, 73 residues long: Large ribosomal subunit protein bL31 (73 aa).

This sequence belongs to the bacterial ribosomal protein bL31 family. Type A subfamily. As to quaternary structure, part of the 50S ribosomal subunit.

Functionally, binds the 23S rRNA. This Dinoroseobacter shibae (strain DSM 16493 / NCIMB 14021 / DFL 12) protein is Large ribosomal subunit protein bL31.